Consider the following 321-residue polypeptide: Glutaminase (321 aa).

Substrate-binding residues include serine 69, asparagine 120, glutamate 165, asparagine 172, tyrosine 196, tyrosine 248, and valine 266.

Belongs to the glutaminase family. In terms of assembly, homotetramer.

The enzyme catalyses L-glutamine + H2O = L-glutamate + NH4(+). This Bacteroides fragilis (strain ATCC 25285 / DSM 2151 / CCUG 4856 / JCM 11019 / LMG 10263 / NCTC 9343 / Onslow / VPI 2553 / EN-2) protein is Glutaminase.